The sequence spans 215 residues: Thiamine-phosphate synthase (215 aa).

Residues 42–46 (QYREK) and aspartate 77 contribute to the 4-amino-2-methyl-5-(diphosphooxymethyl)pyrimidine site. Mg(2+) is bound by residues aspartate 78 and aspartate 97. 4-amino-2-methyl-5-(diphosphooxymethyl)pyrimidine is bound at residue serine 116. 143-145 (TKS) lines the 2-[(2R,5Z)-2-carboxy-4-methylthiazol-5(2H)-ylidene]ethyl phosphate pocket. Lysine 146 contributes to the 4-amino-2-methyl-5-(diphosphooxymethyl)pyrimidine binding site. Residues glycine 174 and 194–195 (IS) each bind 2-[(2R,5Z)-2-carboxy-4-methylthiazol-5(2H)-ylidene]ethyl phosphate.

Belongs to the thiamine-phosphate synthase family. Requires Mg(2+) as cofactor.

The catalysed reaction is 2-[(2R,5Z)-2-carboxy-4-methylthiazol-5(2H)-ylidene]ethyl phosphate + 4-amino-2-methyl-5-(diphosphooxymethyl)pyrimidine + 2 H(+) = thiamine phosphate + CO2 + diphosphate. It carries out the reaction 2-(2-carboxy-4-methylthiazol-5-yl)ethyl phosphate + 4-amino-2-methyl-5-(diphosphooxymethyl)pyrimidine + 2 H(+) = thiamine phosphate + CO2 + diphosphate. The enzyme catalyses 4-methyl-5-(2-phosphooxyethyl)-thiazole + 4-amino-2-methyl-5-(diphosphooxymethyl)pyrimidine + H(+) = thiamine phosphate + diphosphate. Its pathway is cofactor biosynthesis; thiamine diphosphate biosynthesis; thiamine phosphate from 4-amino-2-methyl-5-diphosphomethylpyrimidine and 4-methyl-5-(2-phosphoethyl)-thiazole: step 1/1. In terms of biological role, condenses 4-methyl-5-(beta-hydroxyethyl)thiazole monophosphate (THZ-P) and 2-methyl-4-amino-5-hydroxymethyl pyrimidine pyrophosphate (HMP-PP) to form thiamine monophosphate (TMP). The chain is Thiamine-phosphate synthase from Limosilactobacillus reuteri (strain DSM 20016) (Lactobacillus reuteri).